Consider the following 186-residue polypeptide: Periplasmic nitrate reductase, electron transfer subunit (186 aa).

The signal sequence occupies residues 1 to 20 (MKTSKLNFLTLVASTGLALA). Heme c-binding residues include H87, C102, C105, H106, H123, C144, C147, and H148.

The protein belongs to the NapB family. As to quaternary structure, component of the periplasmic nitrate reductase NapAB complex composed of NapA and NapB. Post-translationally, binds 2 heme C groups per subunit.

Its subcellular location is the periplasm. Electron transfer subunit of the periplasmic nitrate reductase complex NapAB. Transfers electrons to NapA subunit, thus allowing electron flow between membrane and periplasm. Essential for periplasmic nitrate reduction with nitrate as the terminal electron acceptor. This Wolinella succinogenes (strain ATCC 29543 / DSM 1740 / CCUG 13145 / JCM 31913 / LMG 7466 / NCTC 11488 / FDC 602W) (Vibrio succinogenes) protein is Periplasmic nitrate reductase, electron transfer subunit.